An 808-amino-acid polypeptide reads, in one-letter code: Protein translocase subunit SecA (808 aa).

ATP is bound by residues glutamine 87, 105–109, and aspartate 493; that span reads GEGKT.

Belongs to the SecA family. Monomer and homodimer. Part of the essential Sec protein translocation apparatus which comprises SecA, SecYEG and auxiliary proteins SecDF. Other proteins may also be involved.

It localises to the cell membrane. The protein resides in the cytoplasm. The catalysed reaction is ATP + H2O + cellular proteinSide 1 = ADP + phosphate + cellular proteinSide 2.. In terms of biological role, part of the Sec protein translocase complex. Interacts with the SecYEG preprotein conducting channel. Has a central role in coupling the hydrolysis of ATP to the transfer of proteins into and across the cell membrane, serving as an ATP-driven molecular motor driving the stepwise translocation of polypeptide chains across the membrane. This chain is Protein translocase subunit SecA, found in Mycoplasma pneumoniae (strain ATCC 29342 / M129 / Subtype 1) (Mycoplasmoides pneumoniae).